The following is a 967-amino-acid chain: Aminopeptidase N (967 aa).

Residues Met1–Ser8 are Cytoplasmic-facing. A helical; Signal-anchor for type II membrane protein transmembrane segment spans residues Lys9–Val32. The tract at residues Tyr33–Ser66 is cytosolic Ser/Thr-rich junction. At Tyr33–Ser967 the chain is on the extracellular side. N-linked (GlcNAc...) asparagine glycosylation is present at Asn38. The disordered stretch occupies residues Thr41 to Thr61. The tract at residues Lys67–Ser967 is metalloprotease. N-linked (GlcNAc...) asparagine glycosylation is found at Asn84 and Asn126. Tyr175 is subject to Sulfotyrosine. 2 N-linked (GlcNAc...) asparagine glycosylation sites follow: Asn233 and Asn338. Gly351–Asn355 is a substrate binding site. His387 is a Zn(2+) binding site. Glu388 functions as the Proton acceptor in the catalytic mechanism. Zn(2+)-binding residues include His391 and Glu410. At Tyr418 the chain carries Sulfotyrosine. N-linked (GlcNAc...) asparagine glycosylation is found at Asn626, Asn682, and Asn740. The interval Ala670–Trp840 is interaction with FCoV and TGEV spike glycoprotein. Intrachain disulfides connect Cys762–Cys769 and Cys799–Cys835.

It belongs to the peptidase M1 family. As to quaternary structure, homodimer. Interacts with SLC6A19. (Microbial infection) Interacts with FCoV, CCoV, TGEV and HCoV-229E spike glycoprotein. Zn(2+) is required as a cofactor. In terms of processing, sulfated. N- and O-glycosylated. Post-translationally, may undergo proteolysis and give rise to a soluble form.

Its subcellular location is the cell membrane. It carries out the reaction Release of an N-terminal amino acid, Xaa-|-Yaa- from a peptide, amide or arylamide. Xaa is preferably Ala, but may be most amino acids including Pro (slow action). When a terminal hydrophobic residue is followed by a prolyl residue, the two may be released as an intact Xaa-Pro dipeptide.. Broad specificity aminopeptidase which plays a role in the final digestion of peptides generated from hydrolysis of proteins by gastric and pancreatic proteases. Also involved in the processing of various peptides including peptide hormones, such as angiotensin III and IV, neuropeptides, and chemokines. May also be involved the cleavage of peptides bound to major histocompatibility complex class II molecules of antigen presenting cells. May have a role in angiogenesis and promote cholesterol crystallization. May have a role in amino acid transport by acting as binding partner of amino acid transporter SLC6A19 and regulating its activity. Functionally, (Microbial infection) In case of feline coronavirus (FCoV) infection, serves as a receptor for FCoV spike glycoprotein. It is as well a receptor for other serogroup I coronaviruses, like canine coronavirus (CCoV), porcine transmissible gastroenteritis virus (TGEV), and human coronavirus 229E (HCoV-229E). Also serves as a receptor for infectious bronchitis virus (IBV, Arkansas 99 serotype) in serogroup III. This chain is Aminopeptidase N (ANPEP), found in Felis catus (Cat).